The following is a 471-amino-acid chain: Isochorismate synthase MenF (471 aa).

Lys226 serves as the catalytic Proton acceptor. The active-site Proton donor is Glu275. Residues Glu319 and Glu454 each contribute to the Mg(2+) site.

This sequence belongs to the isochorismate synthase family. Mg(2+) serves as cofactor.

It carries out the reaction chorismate = isochorismate. The protein operates within quinol/quinone metabolism; 1,4-dihydroxy-2-naphthoate biosynthesis; 1,4-dihydroxy-2-naphthoate from chorismate: step 1/7. Its pathway is quinol/quinone metabolism; menaquinone biosynthesis. Its function is as follows. Catalyzes the conversion of chorismate to isochorismate. This chain is Isochorismate synthase MenF, found in Bacillus subtilis (strain 168).